We begin with the raw amino-acid sequence, 1026 residues long: Multidrug resistance protein MdtC (1026 aa).

11 helical membrane-spanning segments follow: residues 15-35 (ILIA…LPVA), 333-353 (EVEE…FLFL), 360-380 (LIPA…MYLC), 387-407 (LSLM…IVVL), 431-451 (VGFT…PLLL), 463-483 (FAVT…TLTP), 528-548 (LVGV…IAIP), 853-873 (LILI…LYES), 897-917 (LFNA…IGIV), 953-973 (PIMM…LSDG), and 984-1004 (ITIV…TPVV).

Belongs to the resistance-nodulation-cell division (RND) (TC 2.A.6) family. MdtC subfamily. In terms of assembly, part of a tripartite efflux system composed of MdtA, MdtB and MdtC. MdtC forms a heteromultimer with MdtB.

It is found in the cell inner membrane. The polypeptide is Multidrug resistance protein MdtC (Salmonella paratyphi B (strain ATCC BAA-1250 / SPB7)).